We begin with the raw amino-acid sequence, 87 residues long: Acyl-CoA-binding protein (87 aa).

Ser2 carries the N-acetylserine modification. Residues 2–87 (SQAEFEKAAE…VEELKKKYGI (86 aa)) form the ACB domain. At Lys8 the chain carries N6-acetyllysine; alternate. At Lys8 the chain carries N6-succinyllysine; alternate. An acyl-CoA is bound at residue Lys14. At Lys17 the chain carries N6-succinyllysine. Lys19 is subject to N6-acetyllysine. Tyr29 bears the Phosphotyrosine mark. Residues 29-33 (YSHYK), Lys51, Lys55, and Tyr74 contribute to the an acyl-CoA site. An N6-acetyllysine modification is found at Lys51. Lys55 is subject to N6-acetyllysine; alternate. An N6-succinyllysine; alternate modification is found at Lys55. At Lys55 the chain carries N6-(2-hydroxyisobutyryl)lysine; alternate. Position 55 is an N6-malonyllysine; alternate (Lys55). Lys77 carries the N6-acetyllysine; alternate modification. Position 77 is an N6-succinyllysine; alternate (Lys77).

The protein belongs to the ACBP family. Monomer.

It is found in the endoplasmic reticulum. The protein localises to the golgi apparatus. Its function is as follows. Binds medium- and long-chain acyl-CoA esters with very high affinity and may function as an intracellular carrier of acyl-CoA esters. It is also able to displace diazepam from the benzodiazepine (BZD) recognition site located on the GABA type A receptor. It is therefore possible that this protein also acts as a neuropeptide to modulate the action of the GABA receptor. DBI(32-86) has antibacterial properties. In Sus scrofa (Pig), this protein is Acyl-CoA-binding protein (DBI).